Consider the following 2410-residue polypeptide: Reducing polyketide synthase FUB1 (2410 aa).

Residues 1–42 are compositionally biased toward low complexity; it reads MTLSNGSNGANGTSNGNGAHPSANGFHNAANGGANNGSANGG. Positions 1–52 are disordered; the sequence is MTLSNGSNGANGTSNGNGAHPSANGFHNAANGGANNGSANGGAEHDAGRPQV. Positions 57-479 constitute a Ketosynthase family 3 (KS3) domain; the sequence is SSAIAVIGVS…GANAHAVLDD (423 aa). Active-site for beta-ketoacyl synthase activity residues include C230, H365, and H403. The segment at 608 to 929 is malonyl-CoA:ACP transacylase (MAT) domain; the sequence is TFIFTGQGAQ…FSAIKRKQDA (322 aa). The For malonyltransferase activity role is filled by S699. Residues 994–1127 form an N-terminal hotdog fold region; sequence LELLGVRDPR…GLVSTSYKHD (134 aa). The region spanning 994–1307 is the PKS/mFAS DH domain; it reads LELLGVRDPR…TVPLRGASDS (314 aa). Residues 995–1302 are dehydratase (DH) domain; sequence ELLGVRDPRS…LKGCKTVPLR (308 aa). Residue H1026 is the Proton acceptor; for dehydratase activity of the active site. The interval 1155–1307 is C-terminal hotdog fold; sequence LPSVDPTVFY…TVPLRGASDS (153 aa). D1220 serves as the catalytic Proton donor; for dehydratase activity. An enoyl reductase (ER) domain region spans residues 1714-2026; sequence GLLDTLEYLS…SGGHVGKIVL (313 aa). Residues 2050-2226 are ketoreductase (KR) domain; the sequence is ATYVLIGGLG…AATSINLSLV (177 aa). The Carrier domain maps to 2329-2406; that stretch reads EVYEIVLQQL…GFTKKVMAKS (78 aa). S2366 bears the O-(pantetheine 4'-phosphoryl)serine mark.

It functions in the pathway mycotoxin biosynthesis. Functionally, reducing polyketide synthase; part of the gene cluster that mediates the biosynthesis of fusaric acid, a mycotoxin with low to moderate toxicity to animals and humans, but with high phytotoxic properties. L-aspartate is suggested as fusaric acid amino acid precursor that is activated and further processed to O-acetyl-L-homoserine by cluster enzymes aspartate kinase FUB3 and homoserine O-acetyltransferase FUB5, as well as enzymes of the primary metabolism. The polyketide synthase (PKS) FUB1 generates the triketide trans-2-hexenal which is presumptively released by the hydrolase FUB4 and linked to the NRPS-bound amino acid precursor by NAD(P)-dependent dehydrogenase FUB6. FUB1, FUB4, and the non-canonical NRPS Fub8 may form an enzyme complex. Further processing of the NRPS-bound intermediate might be carried out by FUB6 and the sulfhydrylase FUB7, enabling a spontaneous electrocyclization to close the carbon backbone of fusaric acid. Dihydrofusaric acid is likely to be released via reduction by the thioester reductase (TR) domain of FUB8 whereupon the final oxidation to fusaric acid may (also) be performed by the FMN-dependent dehydrogenase FUB9. This Gibberella fujikuroi (strain CBS 195.34 / IMI 58289 / NRRL A-6831) (Bakanae and foot rot disease fungus) protein is Reducing polyketide synthase FUB1.